Consider the following 478-residue polypeptide: Proline--tRNA ligase (478 aa).

It belongs to the class-II aminoacyl-tRNA synthetase family. ProS type 3 subfamily. As to quaternary structure, homodimer.

It localises to the cytoplasm. The enzyme catalyses tRNA(Pro) + L-proline + ATP = L-prolyl-tRNA(Pro) + AMP + diphosphate. In terms of biological role, catalyzes the attachment of proline to tRNA(Pro) in a two-step reaction: proline is first activated by ATP to form Pro-AMP and then transferred to the acceptor end of tRNA(Pro). The chain is Proline--tRNA ligase from Clostridium botulinum (strain ATCC 19397 / Type A).